The following is a 230-amino-acid chain: UPF0173 metal-dependent hydrolase Acid_3917 (230 aa).

The protein belongs to the UPF0173 family.

The protein is UPF0173 metal-dependent hydrolase Acid_3917 of Solibacter usitatus (strain Ellin6076).